The sequence spans 287 residues: Taxis protein CheF2 (287 aa).

As to quaternary structure, interacts with chemotaxis (Che) proteins as well as flagella accessory (Fla) proteins.

In terms of biological role, involved in taxis signal transduction. The polypeptide is Taxis protein CheF2 (cheF2) (Halobacterium salinarum (strain ATCC 29341 / DSM 671 / R1)).